Reading from the N-terminus, the 386-residue chain is Orphan methyltransferase M.SssI (386 aa).

The SAM-dependent MTase C5-type domain maps to 11 to 386; that stretch reads LRVFEAFAGI…LEAIIDKIGG (376 aa). Cysteine 141 is an active-site residue.

Belongs to the class I-like SAM-binding methyltransferase superfamily. C5-methyltransferase family.

The enzyme catalyses a 2'-deoxycytidine in DNA + S-adenosyl-L-methionine = a 5-methyl-2'-deoxycytidine in DNA + S-adenosyl-L-homocysteine + H(+). In terms of biological role, this de novo methylase acts completely and exclusively on CG residues in DNA; methylates unmethylated and hemi-methylated DNA. This Spiroplasma monobiae (strain ATCC 33825 / MQ-1) protein is Orphan methyltransferase M.SssI (sssIM).